We begin with the raw amino-acid sequence, 773 residues long: MESNKSSSHGDVSTSPSFLNNHHQFNNGGDIIPKKKKNRIMHVGSYEVGKTLGNGTFGKVKLGTNICTKENVAIKFIKNNKLSGKQKETCFREIDIMKLLDHPNIVKLLDVVDKREEEGTTYLIVEYVSGGELFDYIVAREYIKEKEARKFFRQMISAIEYCHANLIVHRDLKPENLLLDSNGDIKISDFGLSNNIQPGKLLESFCGSPLYAAPEILKAEKYLGPPVDIWSLGVIMYAVLCGNLPWEGDSQAEISFNSVHGNYEDPTHLSAEAVHILRRMIVPNPKDRATIQELKNHPWTNIDYQEIPKSHLPPRDAVHEIKEDIFAHLISLGFPNTKETRDIILKNENCGIVNVYHLLLDRYASKEVENLKSKLELLSKRKKSFSDKRNPSTNSLASIPEDSNDLSSNNNNNQQQQNSPPSKTNSSSTSSSNRESNNNSPSQGSIKEISLDELDNHIEQLDNDIENSDNNKSSSLTRRSSDPNKDIENSLKAQGLFSSYSAPGVPNSDHNYDFETYQQQQQYQQQLHQQQLQLQQQYQSQIQSDISFPHDDVEIESYSIQQQQLQQQQQQQQEQHKEDNNKPNTNLRRNSIAVSTFMEDEPNEMPINNLYKMNEQIQQQPIIGGSGNVMRSQFNQTLPTIDQQPVIEAPKTRRMSLDSRMLNGDQQSLVEKNQHMASPRTSKGIFKSSTTTTKSPEKTIIELKRSLEESGLFTKKKGPYLFLCFDEDNSVKFQIEIVKICNLDLTGIQLKRLSGDTWKYKDICTELVESMKL.

Residues 1–27 (MESNKSSSHGDVSTSPSFLNNHHQFNN) show a composition bias toward polar residues. Residues 1-32 (MESNKSSSHGDVSTSPSFLNNHHQFNNGGDII) are disordered. Residues 46–300 (YEVGKTLGNG…IQELKNHPWT (255 aa)) form the Protein kinase domain. ATP is bound by residues 52–60 (LGNGTFGKV) and Lys75. The active-site Proton acceptor is Asp171. A coiled-coil region spans residues 362–390 (RYASKEVENLKSKLELLSKRKKSFSDKRN). 3 disordered regions span residues 382–445 (KKSF…SQGS), 462–487 (DNDI…NKDI), and 558–588 (YSIQ…TNLR). The span at 405–443 (DLSSNNNNNQQQQNSPPSKTNSSSTSSSNRESNNNSPSQ) shows a compositional bias: low complexity. A coiled-coil region spans residues 445–474 (SIKEISLDELDNHIEQLDNDIENSDNNKSS). The segment covering 468–478 (SDNNKSSSLTR) has biased composition (polar residues). A compositionally biased stretch (low complexity) spans 561 to 573 (QQQQLQQQQQQQQ). In terms of domain architecture, KA1 spans 724-773 (CFDEDNSVKFQIEIVKICNLDLTGIQLKRLSGDTWKYKDICTELVESMKL).

This sequence belongs to the protein kinase superfamily. CAMK Ser/Thr protein kinase family. SNF1 subfamily.

It carries out the reaction L-seryl-[protein] + ATP = O-phospho-L-seryl-[protein] + ADP + H(+). The enzyme catalyses L-threonyl-[protein] + ATP = O-phospho-L-threonyl-[protein] + ADP + H(+). The polypeptide is Probable serine/threonine-protein kinase MARK-C (mrkC) (Dictyostelium discoideum (Social amoeba)).